The chain runs to 250 residues: tRNA (guanine-N(7)-)-methyltransferase (250 aa).

Residues 1 to 10 (MTPDDPRDAS) are compositionally biased toward basic and acidic residues. A disordered region spans residues 1–30 (MTPDDPRDASDASLADATADSASRGHGSFF). Residues 11 to 24 (DASLADATADSASR) are compositionally biased toward low complexity. Glutamate 79, glutamate 104, aspartate 131, and aspartate 153 together coordinate S-adenosyl-L-methionine. The active site involves aspartate 153. Substrate contacts are provided by lysine 157 and aspartate 189.

The protein belongs to the class I-like SAM-binding methyltransferase superfamily. TrmB family.

It carries out the reaction guanosine(46) in tRNA + S-adenosyl-L-methionine = N(7)-methylguanosine(46) in tRNA + S-adenosyl-L-homocysteine. The protein operates within tRNA modification; N(7)-methylguanine-tRNA biosynthesis. Its function is as follows. Catalyzes the formation of N(7)-methylguanine at position 46 (m7G46) in tRNA. This is tRNA (guanine-N(7)-)-methyltransferase from Rhodopseudomonas palustris (strain BisA53).